The following is an 855-amino-acid chain: Leucine--tRNA ligase (855 aa).

Positions 45–55 match the 'HIGH' region motif; the sequence is PYPSGRLHMGH. Positions 619–623 match the 'KMSKS' region motif; it reads KMSKS. Lys-622 is an ATP binding site.

Belongs to the class-I aminoacyl-tRNA synthetase family.

It localises to the cytoplasm. It catalyses the reaction tRNA(Leu) + L-leucine + ATP = L-leucyl-tRNA(Leu) + AMP + diphosphate. This chain is Leucine--tRNA ligase, found in Hyphomonas neptunium (strain ATCC 15444).